Consider the following 462-residue polypeptide: Glycine--tRNA ligase (462 aa).

Residues Arg-100 and Glu-175 each contribute to the substrate site. Residues 207–209 (RNE), 217–222 (FRTREF), 291–292 (EL), and 335–338 (GADR) each bind ATP. 222-226 (FEQME) is a substrate binding site. 331 to 335 (EPSLG) is a substrate binding site.

It belongs to the class-II aminoacyl-tRNA synthetase family. In terms of assembly, homodimer.

Its subcellular location is the cytoplasm. The catalysed reaction is tRNA(Gly) + glycine + ATP = glycyl-tRNA(Gly) + AMP + diphosphate. Functionally, catalyzes the attachment of glycine to tRNA(Gly). The sequence is that of Glycine--tRNA ligase from Clostridium acetobutylicum (strain ATCC 824 / DSM 792 / JCM 1419 / IAM 19013 / LMG 5710 / NBRC 13948 / NRRL B-527 / VKM B-1787 / 2291 / W).